Reading from the N-terminus, the 22-residue chain is Hemoglobinase-like protein 2 (22 aa).

Belongs to the peptidase C13 family.

The catalysed reaction is Hydrolysis of proteins and small molecule substrates at -Asn-|-Xaa- bonds.. This chain is Hemoglobinase-like protein 2, found in Fasciola hepatica (Liver fluke).